A 767-amino-acid chain; its full sequence is Polyribonucleotide nucleotidyltransferase (767 aa).

Mg(2+) contacts are provided by Asp-488 and Asp-494. One can recognise a KH domain in the interval 555–614 (PRLYTMKINPEKIRDVIGKGGSVIRALTEETGCQIDIGEDGTITIASTDADKAELAKKRI). The S1 motif domain maps to 624-692 (GKVYEGPVVK…EKGRIKLSMK (69 aa)). The segment covering 700–742 (GMEFEERAPRREGGFGDRGDRGDRGPRRDRGGDRPERGERPAR) has biased composition (basic and acidic residues). The segment at 700–767 (GMEFEERAPR…QPQQQQGQQQ (68 aa)) is disordered. A compositionally biased stretch (low complexity) spans 752-767 (GAPAAGQPQQQQGQQQ).

It belongs to the polyribonucleotide nucleotidyltransferase family. It depends on Mg(2+) as a cofactor.

Its subcellular location is the cytoplasm. It carries out the reaction RNA(n+1) + phosphate = RNA(n) + a ribonucleoside 5'-diphosphate. Its function is as follows. Involved in mRNA degradation. Catalyzes the phosphorolysis of single-stranded polyribonucleotides processively in the 3'- to 5'-direction. The polypeptide is Polyribonucleotide nucleotidyltransferase (Leptothrix cholodnii (strain ATCC 51168 / LMG 8142 / SP-6) (Leptothrix discophora (strain SP-6))).